The chain runs to 177 residues: Large ribosomal subunit protein uL6 (177 aa).

It belongs to the universal ribosomal protein uL6 family. Part of the 50S ribosomal subunit.

Functionally, this protein binds to the 23S rRNA, and is important in its secondary structure. It is located near the subunit interface in the base of the L7/L12 stalk, and near the tRNA binding site of the peptidyltransferase center. This chain is Large ribosomal subunit protein uL6, found in Sodalis glossinidius (strain morsitans).